Here is a 270-residue protein sequence, read N- to C-terminus: Elongation factor Tu (270 aa).

The 103-residue stretch at 1-103 (GILVVSAADG…AVDDYIPTPE (103 aa)) folds into the tr-type G domain. Residue 35 to 38 (NKVD) coordinates GTP.

Belongs to the TRAFAC class translation factor GTPase superfamily. Classic translation factor GTPase family. EF-Tu/EF-1A subfamily. In terms of assembly, monomer.

It is found in the cytoplasm. It carries out the reaction GTP + H2O = GDP + phosphate + H(+). In terms of biological role, GTP hydrolase that promotes the GTP-dependent binding of aminoacyl-tRNA to the A-site of ribosomes during protein biosynthesis. This Staphylococcus warneri protein is Elongation factor Tu (tuf).